The primary structure comprises 250 residues: tRNA (guanine-N(1)-)-methyltransferase (250 aa).

S-adenosyl-L-methionine contacts are provided by residues glycine 116 and 136–141 (IGDYVL).

Belongs to the RNA methyltransferase TrmD family. As to quaternary structure, homodimer.

The protein resides in the cytoplasm. It catalyses the reaction guanosine(37) in tRNA + S-adenosyl-L-methionine = N(1)-methylguanosine(37) in tRNA + S-adenosyl-L-homocysteine + H(+). Its function is as follows. Specifically methylates guanosine-37 in various tRNAs. This is tRNA (guanine-N(1)-)-methyltransferase from Pseudomonas putida (strain GB-1).